Reading from the N-terminus, the 414-residue chain is WD repeat-containing protein jip5 (414 aa).

5 WD repeats span residues 9 to 48 (PLSADLFSQAIHPNEPVVSVGLSTGHVQTFRLPSEESSDD), 73 to 112 (RHKGSCRCLGFGVDGEMLYSAGTDGLVKAAKAETGVVENK), 118 to 159 (AKDG…SNVS), 222 to 263 (VSSV…DQDE), and 319 to 356 (DETEGVIGLGFDVEGRMVSGGGQVVKVWHEAVGSNDMD). A disordered region spans residues 39–65 (RLPSEESSDDDDGTASNSSARNGKGHI). Residues 357–414 (VDMAGGKRMFGGDSDDSDDDNDSEDSEQEQRQPVEPQRKRKKNKGKGKRDIIAFADID) form a disordered region. Residues 369–383 (DSDDSDDDNDSEDSE) are compositionally biased toward acidic residues. Residues 394–403 (RKRKKNKGKG) are compositionally biased toward basic residues.

Belongs to the WD repeat WDR55 family.

The protein resides in the nucleus. It is found in the nucleolus. The protein is WD repeat-containing protein jip5 (jip5) of Aspergillus clavatus (strain ATCC 1007 / CBS 513.65 / DSM 816 / NCTC 3887 / NRRL 1 / QM 1276 / 107).